The chain runs to 301 residues: Formamidopyrimidine-DNA glycosylase (301 aa).

Residue proline 2 is the Schiff-base intermediate with DNA of the active site. Glutamate 3 (proton donor) is an active-site residue. Residue lysine 58 is the Proton donor; for beta-elimination activity of the active site. Histidine 109, arginine 131, and lysine 174 together coordinate DNA. The segment at 265 to 301 (SVYDREGQACRTPGCGGTVARIVQAGRSTFYCATCQK) adopts an FPG-type zinc-finger fold. The active-site Proton donor; for delta-elimination activity is arginine 291.

Belongs to the FPG family. In terms of assembly, monomer. It depends on Zn(2+) as a cofactor.

The catalysed reaction is Hydrolysis of DNA containing ring-opened 7-methylguanine residues, releasing 2,6-diamino-4-hydroxy-5-(N-methyl)formamidopyrimidine.. The enzyme catalyses 2'-deoxyribonucleotide-(2'-deoxyribose 5'-phosphate)-2'-deoxyribonucleotide-DNA = a 3'-end 2'-deoxyribonucleotide-(2,3-dehydro-2,3-deoxyribose 5'-phosphate)-DNA + a 5'-end 5'-phospho-2'-deoxyribonucleoside-DNA + H(+). Its function is as follows. Involved in base excision repair of DNA damaged by oxidation or by mutagenic agents. Acts as a DNA glycosylase that recognizes and removes damaged bases. Has a preference for oxidized purines, such as 7,8-dihydro-8-oxoguanine (8-oxoG). Has AP (apurinic/apyrimidinic) lyase activity and introduces nicks in the DNA strand. Cleaves the DNA backbone by beta-delta elimination to generate a single-strand break at the site of the removed base with both 3'- and 5'-phosphates. The chain is Formamidopyrimidine-DNA glycosylase from Rhizobium leguminosarum bv. trifolii (strain WSM2304).